The sequence spans 824 residues: Leucine--tRNA ligase (824 aa).

The 'HIGH' region motif lies at 42 to 52 (PYPSGRIHMGH). The 'KMSKS' region signature appears at 581-585 (KMSKS). An ATP-binding site is contributed by K584.

The protein belongs to the class-I aminoacyl-tRNA synthetase family.

The protein resides in the cytoplasm. It catalyses the reaction tRNA(Leu) + L-leucine + ATP = L-leucyl-tRNA(Leu) + AMP + diphosphate. The polypeptide is Leucine--tRNA ligase (Geobacter sulfurreducens (strain ATCC 51573 / DSM 12127 / PCA)).